Consider the following 375-residue polypeptide: Histidine biosynthesis bifunctional protein HisB (375 aa).

A histidinol-phosphatase region spans residues 1–168; sequence MTPILFVDRD…GIAHELADAP (168 aa). The active-site Nucleophile is Asp-8. Asp-8, Asp-10, and Asp-128 together coordinate Mg(2+). The active-site Proton donor is Asp-10. The segment at 169–375 is imidazoleglycerol-phosphate dehydratase; sequence RRAVVQRNTK…SALPTTKGAL (207 aa).

In the N-terminal section; belongs to the histidinol-phosphatase family. The protein in the C-terminal section; belongs to the imidazoleglycerol-phosphate dehydratase family. Requires Mg(2+) as cofactor.

Its subcellular location is the cytoplasm. The enzyme catalyses D-erythro-1-(imidazol-4-yl)glycerol 3-phosphate = 3-(imidazol-4-yl)-2-oxopropyl phosphate + H2O. The catalysed reaction is L-histidinol phosphate + H2O = L-histidinol + phosphate. It participates in amino-acid biosynthesis; L-histidine biosynthesis; L-histidine from 5-phospho-alpha-D-ribose 1-diphosphate: step 6/9. It functions in the pathway amino-acid biosynthesis; L-histidine biosynthesis; L-histidine from 5-phospho-alpha-D-ribose 1-diphosphate: step 8/9. The polypeptide is Histidine biosynthesis bifunctional protein HisB (Xanthomonas oryzae pv. oryzae (strain MAFF 311018)).